The sequence spans 176 residues: NAD(P)H-quinone oxidoreductase subunit 6, chloroplastic (176 aa).

Helical transmembrane passes span 10 to 30 (ILVLFGGFVLLLGGLGVVLLT), 33 to 53 (TFSAFSLGLVLVCISLFYILL), 60 to 80 (VAQLLIYVGAINVLIIFAVMF), 92 to 112 (FWTIGDGFTSLVCITIPFSLM), and 152 to 172 (FYLPFELISIILLVSLIGAIT).

This sequence belongs to the complex I subunit 6 family. As to quaternary structure, NDH is composed of at least 16 different subunits, 5 of which are encoded in the nucleus.

The protein resides in the plastid. The protein localises to the chloroplast thylakoid membrane. The enzyme catalyses a plastoquinone + NADH + (n+1) H(+)(in) = a plastoquinol + NAD(+) + n H(+)(out). It carries out the reaction a plastoquinone + NADPH + (n+1) H(+)(in) = a plastoquinol + NADP(+) + n H(+)(out). Its function is as follows. NDH shuttles electrons from NAD(P)H:plastoquinone, via FMN and iron-sulfur (Fe-S) centers, to quinones in the photosynthetic chain and possibly in a chloroplast respiratory chain. The immediate electron acceptor for the enzyme in this species is believed to be plastoquinone. Couples the redox reaction to proton translocation, and thus conserves the redox energy in a proton gradient. The polypeptide is NAD(P)H-quinone oxidoreductase subunit 6, chloroplastic (ndhG) (Oryza nivara (Indian wild rice)).